A 615-amino-acid chain; its full sequence is Afadin- and alpha-actinin-binding protein (615 aa).

Coiled-coil stretches lie at residues 126-227 (KLGS…IAMD) and 266-293 (RQKQILMENAELKKVLQQMKKEMISLLS). Residues Ser290, Ser293, Ser313, and Ser319 each carry the phosphoserine modification. The segment at 293-316 (SPQKKKPRERAEDGTGTVAISDIE) is disordered. A coiled-coil region spans residues 375 to 461 (ISRQDHEQET…RSFTEAAIRL (87 aa)). Residues Ser537, Ser541, and Ser543 each carry the phosphoserine modification. The segment at 567–615 (PEESKPSEVARESTDQKWSVQSRPSSREGCYSGCSSAFRSAHGDRDDLP) is disordered. Residues 568-581 (EESKPSEVARESTD) are compositionally biased toward basic and acidic residues.

This sequence belongs to the ADIP family. As to quaternary structure, interacts with SSX2 and SSX3. Does not interact with SSX1 and SSX4. Interacts with afadin and alpha-actinin. Interacts with VAV2. Interacts with PCM1. Interacts with WRAP73. As to expression, widely expressed.

It is found in the cell junction. Its subcellular location is the adherens junction. It localises to the nucleus. The protein localises to the cytoplasm. The protein resides in the cytoskeleton. It is found in the microtubule organizing center. Its subcellular location is the centrosome. It localises to the centriolar satellite. The protein localises to the cilium basal body. Functionally, belongs to an adhesion system, which plays a role in the organization of homotypic, interneuronal and heterotypic cell-cell adherens junctions (AJs). May connect the nectin-afadin and E-cadherin-catenin system through alpha-actinin and may be involved in organization of the actin cytoskeleton at AJs through afadin and alpha-actinin. Acts as a centrosome maturation factor, probably by maintaining the integrity of the pericentriolar material and proper microtubule nucleation at mitotic spindle poles. The function seems to implicate at least in part WRAP73; the SSX2IP:WRAP73 complex is proposed to act as regulator of spindle anchoring at the mitotic centrosome. Involved in cell movement: localizes at the leading edge of moving cells in response to PDGF and is required for the formation of the leading edge and the promotion of cell movement, possibly via activation of Rac signaling. Involved in ciliogenesis. It is required for targeted recruitment of the BBSome, CEP290, RAB8, and SSTR3 to the cilia. This is Afadin- and alpha-actinin-binding protein (Ssx2ip) from Mus musculus (Mouse).